Here is a 573-residue protein sequence, read N- to C-terminus: Lauric acid 10-hydroxylase (573 aa).

The next 2 helical transmembrane spans lie at 3 to 23 (YVNILLGLFFTWFLVNGLMSL) and 298 to 318 (LFPTPFLPFIIICPFLYLLIF). Heme is bound at residue Cys516.

This sequence belongs to the cytochrome P450 family. Heme serves as cofactor. In terms of tissue distribution, mostly expressed in flowers and leaves and, at low levels, in roots and stems.

Its subcellular location is the endoplasmic reticulum membrane. The catalysed reaction is an omega-methyl-medium-chain fatty acid + reduced [NADPH--hemoprotein reductase] + O2 = an omega-hydroxy-medium-chain fatty acid + oxidized [NADPH--hemoprotein reductase] + H2O + H(+). The enzyme catalyses decanoate + reduced [NADPH--hemoprotein reductase] + O2 = 10-hydroxydecanoate + oxidized [NADPH--hemoprotein reductase] + H2O + H(+). It catalyses the reaction dodecanoate + reduced [NADPH--hemoprotein reductase] + O2 = 12-hydroxydodecanoate + oxidized [NADPH--hemoprotein reductase] + H2O + H(+). The protein operates within lipid metabolism; fatty acid metabolism. Functionally, cytochrome P450 hydroxylase catalyzing the conversion of decanoate (capric acid) and dodecanoate (lauric acid) to their corresponding omega-hydroxy metabolites, 10-hydroxydecanoate and 12-hydroxydodecanoate, respectively; these hydroxylated components affect plant growth, including reducing root elongation. The protein is Lauric acid 10-hydroxylase of Petunia hybrida (Petunia).